The following is a 336-amino-acid chain: N-lysine methyltransferase KMT5A-B (336 aa).

2 disordered regions span residues Met-1–Gln-107 and Gln-141–Leu-165. Over residues Ser-67–Arg-93 the composition is skewed to basic and acidic residues. Residues Ser-95–Ser-104 show a composition bias toward polar residues. The span at Val-146 to Asn-162 shows a compositional bias: basic residues. In terms of domain architecture, SET spans Asp-200–Gly-321. S-adenosyl-L-methionine-binding positions include Lys-210–Arg-212, Tyr-255, and Asn-282–His-283.

Belongs to the class V-like SAM-binding methyltransferase superfamily. Histone-lysine methyltransferase family. PR/SET subfamily. In terms of processing, phosphorylated during mitosis.

It localises to the nucleus. The protein localises to the chromosome. It carries out the reaction L-lysyl(20)-[histone H4] + S-adenosyl-L-methionine = N(6)-methyl-L-lysyl(20)-[histone H4] + S-adenosyl-L-homocysteine + H(+). The enzyme catalyses L-lysyl-[protein] + S-adenosyl-L-methionine = N(6)-methyl-L-lysyl-[protein] + S-adenosyl-L-homocysteine + H(+). Its function is as follows. Protein-lysine N-methyltransferase that monomethylates both histones and non-histone proteins. Specifically monomethylates 'Lys-20' of histone H4 (H4K20me1). H4K20me1 is enriched during mitosis and represents a specific tag for epigenetic transcriptional repression. Mainly functions in euchromatin regions, thereby playing a central role in the silencing of euchromatic genes. Required for cell proliferation, probably by contributing to the maintenance of proper higher-order structure of DNA during mitosis. Involved in chromosome condensation and proper cytokinesis. This Xenopus laevis (African clawed frog) protein is N-lysine methyltransferase KMT5A-B.